Reading from the N-terminus, the 376-residue chain is MKDLNPEMGKFATTKGPPQDNRGMVDIATLPNFPANRSGTPREEMYLAPNKMETPRILNMNMVPDYLQKENFSPDFSSATVSAKSSPVNVTHDESLPLGTIESNSTKDSKYAVQRQQQQVVDFIENNMQLLSSETLNFRSDIMKTLELPIPKRRDIKGNHLSKLLFAKSPLTINTYCQFYDRRTKRICNQEMIWKDKNSREKHGSRKYQRHLSKVHDVQLTPNNFTEFFDHNSPLFQECYDYQSRLMRDLLVEPDAKFKEKKKKKKGDVNGNHPETGSSLINHQVQQQNVRELQSKIAMNDLIEILIDLNIPFSVLDYQPMRNWLIKYSIISTDTLPDEVYFKTDPGVNELEHNSSNLNNSNSGTPHNHNQNQHTN.

Disordered regions lie at residues 1–23 (MKDL…DNRG), 88–107 (VNVT…NSTK), 258–279 (FKEK…TGSS), and 347–376 (GVNE…QHTN). The segment covering 354-376 (NSSNLNNSNSGTPHNHNQNQHTN) has biased composition (low complexity).

It is found in the cytoplasm. Its subcellular location is the nucleus. The protein localises to the mitochondrion. Its function is as follows. Mitochondrial and nuclear transcriptional activator required for respiratory growth. This is Respiration factor 1 (RSF1) from Saccharomyces cerevisiae (strain YJM789) (Baker's yeast).